The chain runs to 395 residues: ATP synthase subunit beta, chloroplastic (395 aa).

Glycine 72 to threonine 79 serves as a coordination point for ATP.

This sequence belongs to the ATPase alpha/beta chains family. As to quaternary structure, F-type ATPases have 2 components, CF(1) - the catalytic core - and CF(0) - the membrane proton channel. CF(1) has five subunits: alpha(3), beta(3), gamma(1), delta(1), epsilon(1). CF(0) has four main subunits: a(1), b(1), b'(1) and c(9-12).

It localises to the plastid. Its subcellular location is the chloroplast thylakoid membrane. The catalysed reaction is ATP + H2O + 4 H(+)(in) = ADP + phosphate + 5 H(+)(out). Produces ATP from ADP in the presence of a proton gradient across the membrane. The catalytic sites are hosted primarily by the beta subunits. This chain is ATP synthase subunit beta, chloroplastic, found in Blechnum occidentale (Hammock fern).